A 473-amino-acid chain; its full sequence is 6-phospho-beta-glucosidase (473 aa).

Glu-174 functions as the Proton donor in the catalytic mechanism. The Nucleophile role is filled by Glu-366.

Belongs to the glycosyl hydrolase 1 family.

It catalyses the reaction 6-phospho-beta-D-glucosyl-(1-&gt;4)-D-glucose + H2O = D-glucose 6-phosphate + D-glucose. In Clostridium longisporum, this protein is 6-phospho-beta-glucosidase (abgA).